A 308-amino-acid polypeptide reads, in one-letter code: Homoserine O-acetyltransferase (308 aa).

Cys-142 (acyl-thioester intermediate) is an active-site residue. Positions 163 and 192 each coordinate substrate. Catalysis depends on His-235, which acts as the Proton acceptor. Glu-237 is a catalytic residue. Substrate is bound at residue Arg-249.

Belongs to the MetA family.

It is found in the cytoplasm. The enzyme catalyses L-homoserine + acetyl-CoA = O-acetyl-L-homoserine + CoA. It participates in amino-acid biosynthesis; L-methionine biosynthesis via de novo pathway; O-acetyl-L-homoserine from L-homoserine: step 1/1. Its function is as follows. Transfers an acetyl group from acetyl-CoA to L-homoserine, forming acetyl-L-homoserine. The chain is Homoserine O-acetyltransferase from Agrobacterium fabrum (strain C58 / ATCC 33970) (Agrobacterium tumefaciens (strain C58)).